We begin with the raw amino-acid sequence, 100 residues long: NADH-quinone oxidoreductase subunit K (100 aa).

3 helical membrane-spanning segments follow: residues 4 to 24 (TSYY…GVLI), 29 to 49 (LVLF…LVTF), and 60 to 80 (IVVF…LALL).

The protein belongs to the complex I subunit 4L family. As to quaternary structure, NDH-1 is composed of 14 different subunits. Subunits NuoA, H, J, K, L, M, N constitute the membrane sector of the complex.

The protein localises to the cell membrane. It catalyses the reaction a quinone + NADH + 5 H(+)(in) = a quinol + NAD(+) + 4 H(+)(out). In terms of biological role, NDH-1 shuttles electrons from NADH, via FMN and iron-sulfur (Fe-S) centers, to quinones in the respiratory chain. The immediate electron acceptor for the enzyme in this species is believed to be ubiquinone. Couples the redox reaction to proton translocation (for every two electrons transferred, four hydrogen ions are translocated across the cytoplasmic membrane), and thus conserves the redox energy in a proton gradient. The sequence is that of NADH-quinone oxidoreductase subunit K from Roseiflexus sp. (strain RS-1).